A 106-amino-acid chain; its full sequence is UPF0145 protein BDI_2732 (106 aa).

It belongs to the UPF0145 family.

The polypeptide is UPF0145 protein BDI_2732 (Parabacteroides distasonis (strain ATCC 8503 / DSM 20701 / CIP 104284 / JCM 5825 / NCTC 11152)).